A 361-amino-acid chain; its full sequence is tRNA/tmRNA (uracil-C(5))-methyltransferase (361 aa).

Residues Gln-183, Tyr-211, Asn-216, Glu-232, and Asp-294 each coordinate S-adenosyl-L-methionine. The active-site Nucleophile is the Cys-319. The active-site Proton acceptor is the Glu-353.

The protein belongs to the class I-like SAM-binding methyltransferase superfamily. RNA M5U methyltransferase family. TrmA subfamily.

It carries out the reaction uridine(54) in tRNA + S-adenosyl-L-methionine = 5-methyluridine(54) in tRNA + S-adenosyl-L-homocysteine + H(+). It catalyses the reaction uridine(341) in tmRNA + S-adenosyl-L-methionine = 5-methyluridine(341) in tmRNA + S-adenosyl-L-homocysteine + H(+). Its function is as follows. Dual-specificity methyltransferase that catalyzes the formation of 5-methyluridine at position 54 (m5U54) in all tRNAs, and that of position 341 (m5U341) in tmRNA (transfer-mRNA). This is tRNA/tmRNA (uracil-C(5))-methyltransferase from Acinetobacter baumannii (strain AB307-0294).